The primary structure comprises 1022 residues: GPI ethanolamine phosphate transferase 1 (1022 aa).

Residues M1–R6 lie on the Cytoplasmic side of the membrane. The helical transmembrane segment at V7–I27 threads the bilayer. The Lumenal segment spans residues Y28 to R466. 2 N-linked (GlcNAc...) asparagine glycosylation sites follow: N148 and N433. Residues T467–L487 form a helical membrane-spanning segment. Residues H488–R498 lie on the Cytoplasmic side of the membrane. The helical transmembrane segment at T499–Y519 threads the bilayer. Residues Q520–S560 are Lumenal-facing. The chain crosses the membrane as a helical span at residues V561 to L581. At V582–D589 the chain is on the cytoplasmic side. Residues I590–L610 traverse the membrane as a helical segment. The Lumenal portion of the chain corresponds to G611–K614. The chain crosses the membrane as a helical span at residues L615–A635. The Cytoplasmic portion of the chain corresponds to N636–D640. Residues M641 to F661 traverse the membrane as a helical segment. The Lumenal segment spans residues E662–T685. Residues I686 to A706 traverse the membrane as a helical segment. The Cytoplasmic portion of the chain corresponds to S707–G713. Residues L714–F734 form a helical membrane-spanning segment. Over L735–M749 the chain is Lumenal. A run of 2 helical transmembrane segments spans residues V750–F770 and Y771–H791. The Lumenal segment spans residues T792–R837. N805 carries an N-linked (GlcNAc...) asparagine glycan. The chain crosses the membrane as a helical span at residues V838–S858. The Cytoplasmic segment spans residues V859–G880. Residues A881–L901 form a helical membrane-spanning segment. The Lumenal portion of the chain corresponds to N902–S910. The chain crosses the membrane as a helical span at residues A911–V931. At R932–F947 the chain is on the cytoplasmic side. The chain crosses the membrane as a helical span at residues C948–I968. The Lumenal portion of the chain corresponds to S969–S1022. The N-linked (GlcNAc...) asparagine glycan is linked to N989. Residues P998 to S1022 are disordered.

It belongs to the PIGG/PIGN/PIGO family. PIGN subfamily.

Its subcellular location is the endoplasmic reticulum membrane. It functions in the pathway glycolipid biosynthesis; glycosylphosphatidylinositol-anchor biosynthesis. Ethanolamine phosphate transferase involved in glycosylphosphatidylinositol-anchor biosynthesis. Transfers ethanolamine phosphate to the first alpha-1,4-linked mannose of the glycosylphosphatidylinositol precursor of GPI-anchor. In Aspergillus oryzae (strain ATCC 42149 / RIB 40) (Yellow koji mold), this protein is GPI ethanolamine phosphate transferase 1 (mcd4).